The sequence spans 570 residues: Periplasmic trehalase (570 aa).

An N-terminal signal peptide occupies residues methionine 1–alanine 34. Substrate contacts are provided by residues arginine 159, tryptophan 166–aspartate 167, asparagine 203, arginine 212–glutamine 214, arginine 284–glutamate 286, and glycine 317. Residues aspartate 319 and glutamate 503 each act as proton donor/acceptor in the active site. Glutamate 518 provides a ligand contact to substrate. A disordered region spans residues proline 545 to glutamine 570. A compositionally biased stretch (low complexity) spans proline 554–glutamine 570.

The protein belongs to the glycosyl hydrolase 37 family. In terms of assembly, monomer.

It is found in the periplasm. It carries out the reaction alpha,alpha-trehalose + H2O = alpha-D-glucose + beta-D-glucose. In terms of biological role, provides the cells with the ability to utilize trehalose at high osmolarity by splitting it into glucose molecules that can subsequently be taken up by the phosphotransferase-mediated uptake system. The protein is Periplasmic trehalase of Salmonella agona (strain SL483).